We begin with the raw amino-acid sequence, 427 residues long: UDP-N-acetylglucosamine--N-acetylmuramyl-(pentapeptide) pyrophosphoryl-undecaprenol N-acetylglucosamine transferase (427 aa).

UDP-N-acetyl-alpha-D-glucosamine-binding positions include 29 to 31 (TGG), asparagine 141, arginine 177, serine 205, isoleucine 258, and glutamine 303. The tract at residues 408 to 427 (SLHPIPDSRFPIRTSAGGAQ) is disordered.

The protein belongs to the glycosyltransferase 28 family. MurG subfamily.

It is found in the cell inner membrane. The catalysed reaction is di-trans,octa-cis-undecaprenyl diphospho-N-acetyl-alpha-D-muramoyl-L-alanyl-D-glutamyl-meso-2,6-diaminopimeloyl-D-alanyl-D-alanine + UDP-N-acetyl-alpha-D-glucosamine = di-trans,octa-cis-undecaprenyl diphospho-[N-acetyl-alpha-D-glucosaminyl-(1-&gt;4)]-N-acetyl-alpha-D-muramoyl-L-alanyl-D-glutamyl-meso-2,6-diaminopimeloyl-D-alanyl-D-alanine + UDP + H(+). It functions in the pathway cell wall biogenesis; peptidoglycan biosynthesis. Its function is as follows. Cell wall formation. Catalyzes the transfer of a GlcNAc subunit on undecaprenyl-pyrophosphoryl-MurNAc-pentapeptide (lipid intermediate I) to form undecaprenyl-pyrophosphoryl-MurNAc-(pentapeptide)GlcNAc (lipid intermediate II). The sequence is that of UDP-N-acetylglucosamine--N-acetylmuramyl-(pentapeptide) pyrophosphoryl-undecaprenol N-acetylglucosamine transferase from Xanthomonas campestris pv. campestris (strain B100).